The following is a 945-amino-acid chain: Leucine--tRNA ligase (945 aa).

The 'HIGH' region signature appears at 43–53 (PYPNGAVHIGH). The short motif at 638–642 (KMSKS) is the 'KMSKS' region element. K641 contacts ATP.

This sequence belongs to the class-I aminoacyl-tRNA synthetase family.

It is found in the cytoplasm. The enzyme catalyses tRNA(Leu) + L-leucine + ATP = L-leucyl-tRNA(Leu) + AMP + diphosphate. The sequence is that of Leucine--tRNA ligase from Pyrobaculum islandicum (strain DSM 4184 / JCM 9189 / GEO3).